Reading from the N-terminus, the 1191-residue chain is DNA-directed RNA polymerase subunit beta (1191 aa).

A compositionally biased stretch (basic and acidic residues) spans Arg-1171 to Ala-1181. Positions Arg-1171 to Asp-1191 are disordered. Low complexity predominate over residues Glu-1182–Asp-1191.

The protein belongs to the RNA polymerase beta chain family. In terms of assembly, the RNAP catalytic core consists of 2 alpha, 1 beta, 1 beta' and 1 omega subunit. When a sigma factor is associated with the core the holoenzyme is formed, which can initiate transcription.

The enzyme catalyses RNA(n) + a ribonucleoside 5'-triphosphate = RNA(n+1) + diphosphate. Functionally, DNA-dependent RNA polymerase catalyzes the transcription of DNA into RNA using the four ribonucleoside triphosphates as substrates. This chain is DNA-directed RNA polymerase subunit beta, found in Streptococcus agalactiae serotype Ia (strain ATCC 27591 / A909 / CDC SS700).